Consider the following 148-residue polypeptide: Snaclec jerdonuxin subunit beta (148 aa).

The signal sequence occupies residues 1–23; it reads MVRFIFVSFGLLVVFLSLSGIGA. 3 disulfides stabilise this stretch: C27–C38, C55–C144, and C121–C136. The C-type lectin domain maps to 34-145; it reads YDEHCYQVFQ…CSSKRYIVCK (112 aa).

It belongs to the snaclec family. In terms of assembly, tetramer of 4 heterodimers of alpha and beta subunits; disulfide-linked. In terms of tissue distribution, expressed by the venom gland.

The protein localises to the secreted. Functionally, snaclec that strongly induces platelet aggregation, in a dose-dependent manner. This is Snaclec jerdonuxin subunit beta from Protobothrops jerdonii (Jerdon's pitviper).